A 327-amino-acid chain; its full sequence is Phenylalanine--tRNA ligase alpha subunit (327 aa).

E252 contacts Mg(2+).

It belongs to the class-II aminoacyl-tRNA synthetase family. Phe-tRNA synthetase alpha subunit type 1 subfamily. Tetramer of two alpha and two beta subunits. Mg(2+) is required as a cofactor.

It localises to the cytoplasm. It carries out the reaction tRNA(Phe) + L-phenylalanine + ATP = L-phenylalanyl-tRNA(Phe) + AMP + diphosphate + H(+). The protein is Phenylalanine--tRNA ligase alpha subunit of Vibrio cholerae serotype O1 (strain ATCC 39541 / Classical Ogawa 395 / O395).